The chain runs to 117 residues: Immunoglobulin kappa variable 9-129 (117 aa).

The first 22 residues, 1-22, serve as a signal peptide directing secretion; the sequence is MDMRAPAQVFGFLLLWFPGARC. Positions 23-45 are framework-1; that stretch reads DIQMTQSPSSLSASLGERVSLTC. The cysteines at positions 45 and 110 are disulfide-linked. The segment at 46-56 is complementarity-determining-1; the sequence is RASQDIHGYLN. Residues 57–71 form a framework-2 region; sequence LFQQKPGETIKHLIY. The interval 72-78 is complementarity-determining-2; sequence ETSNLDS. Residues 79–110 are framework-3; it reads GVPKRFSGSRSGSDYSLIIGSLESEDFADYYC. The tract at residues 111–117 is complementarity-determining-3; it reads LQYASSP.

This chain is Immunoglobulin kappa variable 9-129, found in Mus musculus (Mouse).